A 303-amino-acid polypeptide reads, in one-letter code: N-acetyl-D-glucosamine kinase (303 aa).

ATP contacts are provided by residues 4-11 (GFDIGGTK) and 133-140 (GVGGGLIF). Positions 157, 177, 179, and 184 each coordinate Zn(2+).

It belongs to the ROK (NagC/XylR) family. NagK subfamily.

The catalysed reaction is N-acetyl-D-glucosamine + ATP = N-acetyl-D-glucosamine 6-phosphate + ADP + H(+). It functions in the pathway cell wall biogenesis; peptidoglycan recycling. Catalyzes the phosphorylation of N-acetyl-D-glucosamine (GlcNAc) derived from cell-wall degradation, yielding GlcNAc-6-P. The polypeptide is N-acetyl-D-glucosamine kinase (Escherichia fergusonii (strain ATCC 35469 / DSM 13698 / CCUG 18766 / IAM 14443 / JCM 21226 / LMG 7866 / NBRC 102419 / NCTC 12128 / CDC 0568-73)).